We begin with the raw amino-acid sequence, 260 residues long: Type III pantothenate kinase (260 aa).

6–13 (DAGNTRTK) contacts ATP. Residues Y88 and 95 to 98 (GVDR) each bind substrate. The active-site Proton acceptor is D97. S121 is an ATP binding site. Residue T184 coordinates substrate.

It belongs to the type III pantothenate kinase family. Homodimer. The cofactor is NH4(+). K(+) serves as cofactor.

It localises to the cytoplasm. The enzyme catalyses (R)-pantothenate + ATP = (R)-4'-phosphopantothenate + ADP + H(+). It participates in cofactor biosynthesis; coenzyme A biosynthesis; CoA from (R)-pantothenate: step 1/5. Its function is as follows. Catalyzes the phosphorylation of pantothenate (Pan), the first step in CoA biosynthesis. This is Type III pantothenate kinase from Saccharophagus degradans (strain 2-40 / ATCC 43961 / DSM 17024).